Consider the following 949-residue polypeptide: Glycine dehydrogenase (decarboxylating) (949 aa).

K702 carries the post-translational modification N6-(pyridoxal phosphate)lysine.

This sequence belongs to the GcvP family. As to quaternary structure, the glycine cleavage system is composed of four proteins: P, T, L and H. It depends on pyridoxal 5'-phosphate as a cofactor.

The catalysed reaction is N(6)-[(R)-lipoyl]-L-lysyl-[glycine-cleavage complex H protein] + glycine + H(+) = N(6)-[(R)-S(8)-aminomethyldihydrolipoyl]-L-lysyl-[glycine-cleavage complex H protein] + CO2. Its function is as follows. The glycine cleavage system catalyzes the degradation of glycine. The P protein binds the alpha-amino group of glycine through its pyridoxal phosphate cofactor; CO(2) is released and the remaining methylamine moiety is then transferred to the lipoamide cofactor of the H protein. This is Glycine dehydrogenase (decarboxylating) from Rhodococcoides fascians (Rhodococcus fascians).